The primary structure comprises 393 residues: S-adenosylmethionine synthase (393 aa).

Glutamate 9 contributes to the Mg(2+) binding site. Histidine 15 is a binding site for ATP. A K(+)-binding site is contributed by glutamate 43. Positions 56 and 99 each coordinate L-methionine. ATP is bound by residues 167–169 (HGK), 235–238 (SGRF), aspartate 246, 252–253 (RK), alanine 269, lysine 273, and lysine 277. Aspartate 246 contacts L-methionine. Residue lysine 277 coordinates L-methionine.

Belongs to the AdoMet synthase family. In terms of assembly, homotetramer. Requires Mn(2+) as cofactor. It depends on Mg(2+) as a cofactor. Co(2+) is required as a cofactor. The cofactor is K(+). In terms of tissue distribution, root.

It is found in the cytoplasm. The catalysed reaction is L-methionine + ATP + H2O = S-adenosyl-L-methionine + phosphate + diphosphate. It functions in the pathway amino-acid biosynthesis; S-adenosyl-L-methionine biosynthesis; S-adenosyl-L-methionine from L-methionine: step 1/1. Catalyzes the formation of S-adenosylmethionine from methionine and ATP. The reaction comprises two steps that are both catalyzed by the same enzyme: formation of S-adenosylmethionine (AdoMet) and triphosphate, and subsequent hydrolysis of the triphosphate. This is S-adenosylmethionine synthase (METK) from Pinus banksiana (Jack pine).